The primary structure comprises 578 residues: Arginine--tRNA ligase (578 aa).

The 'HIGH' region signature appears at 125-135; it reads PNVAKKMHVGH.

The protein belongs to the class-I aminoacyl-tRNA synthetase family. In terms of assembly, monomer.

It localises to the cytoplasm. It carries out the reaction tRNA(Arg) + L-arginine + ATP = L-arginyl-tRNA(Arg) + AMP + diphosphate. The chain is Arginine--tRNA ligase from Buchnera aphidicola subsp. Baizongia pistaciae (strain Bp).